A 379-amino-acid polypeptide reads, in one-letter code: Cytochrome bd-I ubiquinol oxidase subunit 2 (379 aa).

Met1 bears the N-formylmethionine mark. Residues 1–8 (MIDYEVLR) are Cytoplasmic-facing. Residues 9 to 28 (FIWWLLVGVLLIGFAVTDGF) form a helical membrane-spanning segment. Topologically, residues 29 to 79 (DMGVGMLTRFLGRNDTERRIMINSIAPHWDGNQVWLITAGGALFAAWPMVY) are periplasmic. Residues 80–99 (AAAFSGFYVAMILVLASLFF) form a helical membrane-spanning segment. Residues 100–122 (RPVGFDYRSKIEETRWRNMWDWG) lie on the Cytoplasmic side of the membrane. The helical transmembrane segment at 123–142 (IFIGSFVPPLVIGVAFGNLL) threads the bilayer. Topologically, residues 143–164 (QGVPFNVDEYLRLYYTGNFFQL) are periplasmic. A helical membrane pass occupies residues 165 to 184 (LNPFGLLAGVVSVGMIITQG). The Cytoplasmic segment spans residues 185-205 (ATYLQMRTVGELHLRTRATAQ). Residues 206–225 (VAALVTLVCFALAGVWVMYG) traverse the membrane as a helical segment. Residues 226–262 (IDGYVVKSTMDHYAASNPLNKEVVREAGAWLVNFNNT) are Periplasmic-facing. A helical transmembrane segment spans residues 263 to 282 (PILWAIPALGVVLPLLTILT). The Cytoplasmic segment spans residues 283 to 292 (ARMDKAAWAF). A helical transmembrane segment spans residues 293 to 312 (VFSSLTLACIILTAGIAMFP). The Periplasmic segment spans residues 313–336 (FVMPSSTMMNASLTMWDATSSQLT). A helical transmembrane segment spans residues 337–356 (LNVMTWVAVVLVPIILLYTA). Topologically, residues 357–379 (WCYWKMFGRITKEDIERNTHSLY) are cytoplasmic.

The protein belongs to the cytochrome ubiquinol oxidase subunit 2 family. Heterodimer of subunits I and II. Requires heme b as cofactor. The cofactor is heme d cis-diol.

The protein resides in the cell inner membrane. The enzyme catalyses 2 a ubiquinol + O2(in) + 4 H(+)(in) = 2 a ubiquinone + 2 H2O(in) + 4 H(+)(out). It functions in the pathway energy metabolism; oxidative phosphorylation. In terms of biological role, a terminal oxidase that produces a proton motive force by the vectorial transfer of protons across the inner membrane. It is the component of the aerobic respiratory chain of E.coli that predominates when cells are grown at low aeration. Generates a proton motive force using protons and electrons from opposite sides of the membrane to generate H(2)O, transferring 1 proton/electron. The sequence is that of Cytochrome bd-I ubiquinol oxidase subunit 2 (cydB) from Escherichia coli O157:H7.